Reading from the N-terminus, the 1161-residue chain is Nardilysin (1161 aa).

The first 18 residues, 1-18 (MLRRVAVAAVFATGRKLR), serve as a signal peptide directing secretion. Disordered regions lie at residues 42–105 (KPFP…KSPS) and 130–218 (VEGK…KKTT). Residues S85, S91, and S93 each carry the phosphoserine modification. Positions 138-209 (TDEEEEEEEE…EENELEELEE (72 aa)) are enriched in acidic residues. Residue H244 participates in Zn(2+) binding. Residue E247 is the Proton acceptor of the active site. Residues H248 and E325 each contribute to the Zn(2+) site.

This sequence belongs to the peptidase M16 family. As to quaternary structure, interacts with BACE1 and NRG1. Zn(2+) is required as a cofactor. In terms of tissue distribution, testis, and in a lower level in brain, heart and adrenal glands.

Its subcellular location is the mitochondrion. The protein resides in the cell projection. It is found in the dendrite. It catalyses the reaction Hydrolysis of polypeptides, preferably at -Xaa-|-Arg-Lys-, and less commonly at -Arg-|-Arg-Xaa-, in which Xaa is not Arg or Lys.. Its function is as follows. Cleaves peptide substrates on the N-terminus of arginine residues in dibasic pairs. Is a critical activator of BACE1- and ADAM17-mediated pro-neuregulin ectodomain shedding, involved in the positive regulation of axonal maturation and myelination. Required for proper functioning of 2-oxoglutarate dehydrogenase (OGDH). The polypeptide is Nardilysin (Rattus norvegicus (Rat)).